A 298-amino-acid chain; its full sequence is Myoblast determination protein 1 homolog (298 aa).

The segment covering 53 to 73 (PEEHPHTRAPPREPTEEEHVR) has biased composition (basic and acidic residues). The disordered stretch occupies residues 53-77 (PEEHPHTRAPPREPTEEEHVRAPSG). The region spanning 100–151 (DRRKAATMRERRRLSKVNEAFETLKRCTSTNPNQRLPKVEILRNAIRYIESL) is the bHLH domain. Disordered regions lie at residues 170-220 (SGES…GKSS) and 242-298 (CPIL…YQVL). 2 stretches are compositionally biased toward polar residues: residues 173–183 (SDASSPRSNCS) and 257–284 (CSPQEGGNLSDSGAQIPSPTNCTPLPQE).

In terms of assembly, efficient DNA binding requires dimerization with another bHLH protein. Seems to form active heterodimers with ITF-2.

The protein localises to the nucleus. Its function is as follows. Acts as a transcriptional activator that promotes transcription of muscle-specific target genes and plays a role in muscle differentiation. Induces fibroblasts to differentiate into myoblasts. Interacts with and is inhibited by the twist protein. This interaction probably involves the basic domains of both proteins. This Gallus gallus (Chicken) protein is Myoblast determination protein 1 homolog (MYOD1).